A 178-amino-acid chain; its full sequence is CASP-like protein 2U3 (178 aa).

Topologically, residues 1–4 (MACR) are cytoplasmic. Residues 5-25 (VMEVLLRVLAILLSIAGALVM) form a helical membrane-spanning segment. Over 26–52 (AKDKQDTFVMLGTVPVPLYARHSYVEA) the chain is Extracellular. A helical transmembrane segment spans residues 53–73 (FVFLVYANGIVAIYCFIAVLL). The Cytoplasmic segment spans residues 74–80 (SLLAKSR). Residues 81 to 101 (VLAGLLFFMDQALAYLLLAAA) form a helical membrane-spanning segment. The Extracellular segment spans residues 102-132 (AASTEVAYIAKRGEKKLVWGEVCSNFEHFCN). The helical transmembrane segment at 133-153 (LVGVSLVLTFLSVLVLVTLAI) threads the bilayer. At 154 to 178 (LSGKRLFGHPPLCAPPSTPPVHQGV) the chain is on the cytoplasmic side.

This sequence belongs to the Casparian strip membrane proteins (CASP) family. Homodimer and heterodimers.

It is found in the cell membrane. The sequence is that of CASP-like protein 2U3 from Pteridium aquilinum subsp. aquilinum (Bracken fern).